The following is a 622-amino-acid chain: MSLDISQFPVLAQANTPNELRQLPQALLPQVADELREFLLKSVGISSGHFASGLGTVELTVALHYVYNTPFDRLIWDVGHQAYPHKILTGRRDKMHTIRQKDGLHPFPWREESEYDTFSVGHSGTSISAALAMAIAAEKEQAGRKVVAVIGDGAMTGGMVFEAMNHAGDLHNDMLVVLNDNEMSISENVGALNNHLAQLMSGRFYTTLREGGKKVLKGMPVIKEMAKRTEEHLKGMVVPGTLFEELGFNYIGPIDGHDVDALVETMRNMRNLKGPQVLHIMTKKGRGYEPAEKDPIGWHAVPKFDPSLFKKPATKPGLPTFSQVFGKWLCDIAEQDEKVLAITPAMREGSGMVEFSQRFPKQYFDAAIAEQHAVTLAAGFACEGFKPVVAIYSTFLQRAYDQLIHDVALQQLPVLFAIDRGGIVGADGPTHQGAFDLSFMRCIPNMVIMAPSDENECRQMLYTGYCYDAGPSAVRYPRGSATGAMQVEAMTALPIGKGVIKRVGKRIAILNFGTLLASALTAAESLDATVVDMRFVKPLDVDLVKEMAQTHEVLVTVEENAIMGGAGAGVLEQLQKLRMPKAVLQIGLPDEFIKHGSPEEVTHDLQLDAEGILAQINAYLAQ.

Thiamine diphosphate-binding positions include His80 and Gly121–Ser123. Position 152 (Asp152) interacts with Mg(2+). Thiamine diphosphate contacts are provided by residues Gly153–Ala154, Asn181, Tyr288, and Glu370. A Mg(2+)-binding site is contributed by Asn181.

This sequence belongs to the transketolase family. DXPS subfamily. As to quaternary structure, homodimer. Requires Mg(2+) as cofactor. It depends on thiamine diphosphate as a cofactor.

It carries out the reaction D-glyceraldehyde 3-phosphate + pyruvate + H(+) = 1-deoxy-D-xylulose 5-phosphate + CO2. Its pathway is metabolic intermediate biosynthesis; 1-deoxy-D-xylulose 5-phosphate biosynthesis; 1-deoxy-D-xylulose 5-phosphate from D-glyceraldehyde 3-phosphate and pyruvate: step 1/1. Its function is as follows. Catalyzes the acyloin condensation reaction between C atoms 2 and 3 of pyruvate and glyceraldehyde 3-phosphate to yield 1-deoxy-D-xylulose-5-phosphate (DXP). The chain is 1-deoxy-D-xylulose-5-phosphate synthase from Shewanella baltica (strain OS195).